The sequence spans 144 residues: Maximins 8/H7 (144 aa).

A signal peptide spans 1-18; the sequence is MKFKYIVAVSFLIASAYA. The propeptide occupies 19 to 43; that stretch reads RSEENDEQSLSQRDVLEEESLREIR. At Asn-70 the chain carries Asparagine amide. Positions 74-123 are excised as a propeptide; it reads TAEDHEVMKRLEAVMRDLDSLDYPEEASERETRGFNQEEIANLFTKKEKR. Leu-143 carries the leucine amide modification.

Belongs to the bombinin family. Expressed by the skin glands.

The protein resides in the secreted. In terms of biological role, maximin-8 shows antimicrobial activity against bacteria and against the fungus C.albicans. It has little hemolytic activity. Its function is as follows. Maximin-H7 shows antimicrobial activity against bacteria and against the fungus C.albicans. Shows strong hemolytic activity. The protein is Maximins 8/H7 of Bombina maxima (Giant fire-bellied toad).